The following is a 178-amino-acid chain: ATP-dependent protease subunit HslV (178 aa).

Thr-5 is a catalytic residue. 3 residues coordinate Na(+): Ser-161, Cys-164, and Thr-167.

It belongs to the peptidase T1B family. HslV subfamily. As to quaternary structure, a double ring-shaped homohexamer of HslV is capped on each side by a ring-shaped HslU homohexamer. The assembly of the HslU/HslV complex is dependent on binding of ATP.

The protein localises to the cytoplasm. The catalysed reaction is ATP-dependent cleavage of peptide bonds with broad specificity.. With respect to regulation, allosterically activated by HslU binding. Protease subunit of a proteasome-like degradation complex believed to be a general protein degrading machinery. The polypeptide is ATP-dependent protease subunit HslV (Syntrophomonas wolfei subsp. wolfei (strain DSM 2245B / Goettingen)).